We begin with the raw amino-acid sequence, 640 residues long: 1-deoxy-D-xylulose-5-phosphate synthase (640 aa).

Thiamine diphosphate contacts are provided by residues His-79 and 120-122 (GHS). A Mg(2+)-binding site is contributed by Asp-151. Thiamine diphosphate is bound by residues 152 to 153 (GA), Asn-180, Tyr-287, and Glu-369. Asn-180 contacts Mg(2+).

This sequence belongs to the transketolase family. DXPS subfamily. Homodimer. Requires Mg(2+) as cofactor. Thiamine diphosphate is required as a cofactor.

The catalysed reaction is D-glyceraldehyde 3-phosphate + pyruvate + H(+) = 1-deoxy-D-xylulose 5-phosphate + CO2. It functions in the pathway metabolic intermediate biosynthesis; 1-deoxy-D-xylulose 5-phosphate biosynthesis; 1-deoxy-D-xylulose 5-phosphate from D-glyceraldehyde 3-phosphate and pyruvate: step 1/1. Catalyzes the acyloin condensation reaction between C atoms 2 and 3 of pyruvate and glyceraldehyde 3-phosphate to yield 1-deoxy-D-xylulose-5-phosphate (DXP). In Thioalkalivibrio sulfidiphilus (strain HL-EbGR7), this protein is 1-deoxy-D-xylulose-5-phosphate synthase.